The following is a 514-amino-acid chain: Putative binding protein HI_0213 (514 aa).

An N-terminal signal peptide occupies residues Met-1–Ala-23. Cys-24 carries the N-palmitoyl cysteine lipid modification. Cys-24 carries the S-diacylglycerol cysteine lipid modification.

The protein belongs to the bacterial solute-binding protein 5 family.

Its subcellular location is the cell membrane. In terms of biological role, part of a binding-protein-dependent transport system. The polypeptide is Putative binding protein HI_0213 (Haemophilus influenzae (strain ATCC 51907 / DSM 11121 / KW20 / Rd)).